The primary structure comprises 335 residues: Galactosylgalactosylxylosylprotein 3-beta-glucuronosyltransferase 3 (335 aa).

The Cytoplasmic portion of the chain corresponds to 1-7 (MKLKLKN). Residues 8–28 (VFLAYFLVSIAGLLYALVQLG) form a helical; Signal-anchor for type II membrane protein membrane-spanning segment. Residues 29 to 335 (QPCDCLPPLR…GQGSDPAIEV (307 aa)) lie on the Lumenal side of the membrane. Asp-196 provides a ligand contact to Mn(2+). Glu-281 (proton acceptor) is an active-site residue. N-linked (GlcNAc...) asparagine glycosylation is present at Asn-300. Residues 312–322 (EKPKMKQEEQL) show a composition bias toward basic and acidic residues. A disordered region spans residues 312-335 (EKPKMKQEEQLQRQGQGSDPAIEV).

This sequence belongs to the glycosyltransferase 43 family. As to quaternary structure, homodimer; disulfide-linked. Interacts with PXYLP1; the interaction increases the 2-phosphoxylose phosphatase activity of PXYLP1 during completion of linkage region formation in a B3GAT3-mediated manner. The cofactor is Mn(2+). Post-translationally, N-glycosylated. Liver, brain and heart. Moderate expression seen in lung, skeletal muscle, kidney and testis.

It is found in the golgi apparatus membrane. The protein resides in the golgi apparatus. It localises to the cis-Golgi network. It catalyses the reaction 3-O-(beta-D-galactosyl-(1-&gt;3)-beta-D-galactosyl-(1-&gt;4)-beta-D-xylosyl)-L-seryl-[protein] + UDP-alpha-D-glucuronate = 3-O-(beta-D-GlcA-(1-&gt;3)-beta-D-Gal-(1-&gt;3)-beta-D-Gal-(1-&gt;4)-beta-D-Xyl)-L-seryl-[protein] + UDP + H(+). It participates in protein modification; protein glycosylation. Glycosaminoglycans biosynthesis. Involved in forming the linkage tetrasaccharide present in heparan sulfate and chondroitin sulfate. Transfers a glucuronic acid moiety from the uridine diphosphate-glucuronic acid (UDP-GlcUA) to the common linkage region trisaccharide Gal-beta-1,3-Gal-beta-1,4-Xyl covalently bound to a Ser residue at the glycosaminylglycan attachment site of proteoglycans. Can also play a role in the biosynthesis of l2/HNK-1 carbohydrate epitope on glycoproteins. Highest activity seen with Gal-beta-1,3-Gal-beta-O-R (where R=naphthalenemethanol or benzyl alcohol). Stimulates 2-phosphoxylose phosphatase activity of PXYLP1 in presence of uridine diphosphate-glucuronic acid (UDP-GlcUA) during completion of linkage region formation. In Cricetulus griseus (Chinese hamster), this protein is Galactosylgalactosylxylosylprotein 3-beta-glucuronosyltransferase 3 (B3GAT3).